The following is a 547-amino-acid chain: Solute carrier family 22 member 7 (547 aa).

The next 12 helical transmembrane spans lie at Val21–Leu41, Ala145–Ser165, Leu173–Ser193, Leu203–Leu223, Val233–Ile253, Trp258–Pro278, Ile345–Leu365, Val374–Val396, Leu403–Ser423, Thr431–Phe451, Met465–Leu485, and Leu492–Pro512. The disordered stretch occupies residues Glu521–Asp547.

This sequence belongs to the major facilitator (TC 2.A.1) superfamily. Organic cation transporter (TC 2.A.1.19) family.

It is found in the basolateral cell membrane. Its subcellular location is the apical cell membrane. The protein localises to the cell membrane. The catalysed reaction is orotate(out) + L-glutamate(in) = orotate(in) + L-glutamate(out). It catalyses the reaction 3',5'-cyclic GMP(in) = 3',5'-cyclic GMP(out). The enzyme catalyses GMP(in) = GMP(out). It carries out the reaction 2'-deoxyguanosine(in) = 2'-deoxyguanosine(out). The catalysed reaction is GDP(in) = GDP(out). It catalyses the reaction guanosine(in) = guanosine(out). The enzyme catalyses GTP(in) = GTP(out). It carries out the reaction 3',5'-cyclic AMP(in) = 3',5'-cyclic AMP(out). The catalysed reaction is creatinine(in) = creatinine(out). It catalyses the reaction prostaglandin E2(out) = prostaglandin E2(in). The enzyme catalyses 2-oxoglutarate(in) = 2-oxoglutarate(out). It carries out the reaction glutarate(in) = glutarate(out). The catalysed reaction is urate(out) = urate(in). It catalyses the reaction estrone 3-sulfate(out) = estrone 3-sulfate(in). Its function is as follows. Functions as a Na(+)-independent bidirectional multispecific transporter. Contributes to the renal and hepatic elimination of endogenous organic compounds from the systemic circulation into the urine and bile, respectively. Capable of transporting a wide range of purine and pyrimidine nucleobases, nucleosides and nucleotides, with cGMP, 2'deoxyguanosine and GMP being the preferred substrates. Functions as a pH- and chloride-independent cGMP bidirectional facilitative transporter that can regulate both intracellular and extracellular levels of cGMP and may be involved in cGMP signaling pathways. Mediates orotate/glutamate bidirectional exchange and most likely display a physiological role in hepatic release of glutamate into the blood. Involved in renal secretion and possible reabsorption of creatinine. Able to uptake prostaglandin E2 (PGE2) and may contribute to PGE2 renal excretion. Also transports alpha-ketoglutarate and urate. Apart from the orotate/glutamate exchange, the counterions for the uptake of other SLC22A7/OAT2 substrates remain to be identified. This chain is Solute carrier family 22 member 7 (SLC22A7), found in Sus scrofa (Pig).